Consider the following 154-residue polypeptide: Aspartate carbamoyltransferase regulatory chain (154 aa).

Zn(2+) contacts are provided by C109, C114, C138, and C141.

It belongs to the PyrI family. In terms of assembly, contains catalytic and regulatory chains. Zn(2+) is required as a cofactor.

Involved in allosteric regulation of aspartate carbamoyltransferase. This Sodalis glossinidius (strain morsitans) protein is Aspartate carbamoyltransferase regulatory chain.